The primary structure comprises 997 residues: Bifunctional purine synthesis protein purC/E (997 aa).

An SAICAR synthetase region spans residues Met-1 to Ser-305. Low complexity-rich tracts occupy residues Leu-294–Asn-323, Gln-342–Ser-355, and Thr-524–Ser-536. Disordered regions lie at residues Leu-294–Ser-355, Ile-518–Ala-538, Ile-550–Thr-569, and Pro-575–Ile-604. The interval Ser-305 to Gln-997 is AIR carboxylase. The segment covering Pro-575 to Ser-597 has biased composition (low complexity). ATP contacts are provided by residues Arg-728, Lys-768, Gln-779, Glu-807–Ile-810, and Glu-815. Residues Lys-732–Cys-927 form the ATP-grasp domain. Residues Glu-880 and Glu-898 each coordinate Mg(2+). An ATP-binding site is contributed by Asn-897–Glu-898.

The protein in the N-terminal section; belongs to the SAICAR synthetase family. In the C-terminal section; belongs to the AIR carboxylase family. Class I subfamily. Mg(2+) is required as a cofactor. Requires Mn(2+) as cofactor.

The enzyme catalyses 5-amino-1-(5-phospho-D-ribosyl)imidazole-4-carboxylate + L-aspartate + ATP = (2S)-2-[5-amino-1-(5-phospho-beta-D-ribosyl)imidazole-4-carboxamido]succinate + ADP + phosphate + 2 H(+). It carries out the reaction 5-amino-1-(5-phospho-D-ribosyl)imidazole-4-carboxylate + H(+) = 5-amino-1-(5-phospho-beta-D-ribosyl)imidazole + CO2. Its pathway is purine metabolism; IMP biosynthesis via de novo pathway; 5-amino-1-(5-phospho-D-ribosyl)imidazole-4-carboxylate from 5-amino-1-(5-phospho-D-ribosyl)imidazole (carboxylase route): step 1/1. The protein operates within purine metabolism; IMP biosynthesis via de novo pathway; 5-amino-1-(5-phospho-D-ribosyl)imidazole-4-carboxamide from 5-amino-1-(5-phospho-D-ribosyl)imidazole-4-carboxylate: step 1/2. Its function is as follows. Bifunctional enzyme involved in de novo IMP synthesis, an essential step for de nove purine synthesis. This is Bifunctional purine synthesis protein purC/E (purC/E) from Dictyostelium discoideum (Social amoeba).